The chain runs to 152 residues: Adrenodoxin-like protein 2, mitochondrial (152 aa).

A mitochondrion-targeting transit peptide spans M1–F29. One can recognise a 2Fe-2S ferredoxin-type domain in the interval V41–I146. C80, C86, C89, and C127 together coordinate [2Fe-2S] cluster.

Belongs to the adrenodoxin/putidaredoxin family. The cofactor is [2Fe-2S] cluster.

The protein resides in the mitochondrion. In terms of biological role, required for ecdysteroidogenesis in the prothoracic gland which is necessary for larval to pupal transition. In Drosophila melanogaster (Fruit fly), this protein is Adrenodoxin-like protein 2, mitochondrial.